Consider the following 255-residue polypeptide: Octanoyltransferase (255 aa).

The tract at residues 1 to 21 (MCATPVSPSPESPRSAQAGAA) is disordered. Positions 56 to 242 (FETSDEIWLV…SLIANIDGIP (187 aa)) constitute a BPL/LPL catalytic domain. Substrate contacts are provided by residues 96–103 (RGGQITYH), 173–175 (ALG), and 186–188 (GVS). Cys-204 serves as the catalytic Acyl-thioester intermediate.

Belongs to the LipB family.

Its subcellular location is the cytoplasm. The catalysed reaction is octanoyl-[ACP] + L-lysyl-[protein] = N(6)-octanoyl-L-lysyl-[protein] + holo-[ACP] + H(+). The protein operates within protein modification; protein lipoylation via endogenous pathway; protein N(6)-(lipoyl)lysine from octanoyl-[acyl-carrier-protein]: step 1/2. Functionally, catalyzes the transfer of endogenously produced octanoic acid from octanoyl-acyl-carrier-protein onto the lipoyl domains of lipoate-dependent enzymes. Lipoyl-ACP can also act as a substrate although octanoyl-ACP is likely to be the physiological substrate. This is Octanoyltransferase from Paraburkholderia phymatum (strain DSM 17167 / CIP 108236 / LMG 21445 / STM815) (Burkholderia phymatum).